The primary structure comprises 340 residues: Serpentine receptor class alpha-18 (340 aa).

The next 6 helical transmembrane spans lie at F29–I49, V109–L129, F149–V169, V198–V218, I249–I269, and I285–F305.

Belongs to the nematode receptor-like protein sra family.

It localises to the membrane. The sequence is that of Serpentine receptor class alpha-18 (sra-18) from Caenorhabditis elegans.